A 198-amino-acid chain; its full sequence is Carnitine operon protein CaiE (198 aa).

The tract at residues 174–198 (KPLTQAEENRPRLKGTTDVKPKSAQ) is disordered. The segment covering 180 to 198 (EENRPRLKGTTDVKPKSAQ) has biased composition (basic and acidic residues).

The protein belongs to the transferase hexapeptide repeat family.

It functions in the pathway amine and polyamine metabolism; carnitine metabolism. In terms of biological role, overproduction of CaiE stimulates the activity of CaiB and CaiD. This Salmonella typhimurium (strain LT2 / SGSC1412 / ATCC 700720) protein is Carnitine operon protein CaiE.